A 591-amino-acid chain; its full sequence is Aspartate--tRNA(Asp/Asn) ligase (591 aa).

Glutamate 175 serves as a coordination point for L-aspartate. The interval 199–202 (QQFK) is aspartate. Residues arginine 221 and histidine 453 each contribute to the L-aspartate site. ATP is bound at residue 221–223 (RDE). ATP is bound at residue glutamate 486. L-aspartate is bound at residue arginine 493. Residue 538 to 541 (GIDR) participates in ATP binding.

The protein belongs to the class-II aminoacyl-tRNA synthetase family. Type 1 subfamily. In terms of assembly, homodimer.

The protein resides in the cytoplasm. It carries out the reaction tRNA(Asx) + L-aspartate + ATP = L-aspartyl-tRNA(Asx) + AMP + diphosphate. Its function is as follows. Aspartyl-tRNA synthetase with relaxed tRNA specificity since it is able to aspartylate not only its cognate tRNA(Asp) but also tRNA(Asn). Reaction proceeds in two steps: L-aspartate is first activated by ATP to form Asp-AMP and then transferred to the acceptor end of tRNA(Asp/Asn). The chain is Aspartate--tRNA(Asp/Asn) ligase from Cereibacter sphaeroides (strain KD131 / KCTC 12085) (Rhodobacter sphaeroides).